We begin with the raw amino-acid sequence, 446 residues long: Elongation factor 1-alpha (446 aa).

Residues 5–230 (KNHLNLVVIG…DALDQPKRPK (226 aa)) enclose the tr-type G domain. The G1 stretch occupies residues 14–21 (GHVDSGKS). 14–21 (GHVDSGKS) contributes to the GTP binding site. Positions 70 to 74 (GITID) are G2. A G3 region spans residues 91–94 (DAPG). GTP-binding positions include 91–95 (DAPGH) and 153–156 (NKMD). The tract at residues 153-156 (NKMD) is G4. The G5 stretch occupies residues 194–196 (SGW).

It belongs to the TRAFAC class translation factor GTPase superfamily. Classic translation factor GTPase family. EF-Tu/EF-1A subfamily.

The protein localises to the cytoplasm. In terms of biological role, this protein promotes the GTP-dependent binding of aminoacyl-tRNA to the A-site of ribosomes during protein biosynthesis. The sequence is that of Elongation factor 1-alpha (EFAA) from Stylonychia lemnae (Ciliate).